The sequence spans 210 residues: Ras-related protein Rab-43 (210 aa).

Residue 23-30 (GDASVGKT) coordinates GTP. The Effector region motif lies at 45–53 (QGSTIGVDF). Phosphoserine is present on Ser-47. Position 71–75 (71–75 (DTAGQ)) interacts with GTP. At Thr-80 the chain carries Phosphothreonine. GTP-binding positions include 129–132 (NKSD) and 161–162 (AK). Residues Cys-208 and Cys-210 are each lipidated (S-geranylgeranyl cysteine). A Cysteine methyl ester modification is found at Cys-210.

Belongs to the small GTPase superfamily. Rab family. As to quaternary structure, interacts with GDI1, GDI2 and CHM; phosphorylation at Thr-80 disrupts these interactions.

It is found in the cytoplasmic vesicle. The protein resides in the phagosome. The protein localises to the phagosome membrane. It localises to the golgi apparatus. Its subcellular location is the trans-Golgi network membrane. It is found in the trans-Golgi network. In terms of biological role, the small GTPases Rab are key regulators of intracellular membrane trafficking, from the formation of transport vesicles to their fusion with membranes. Rabs cycle between an inactive GDP-bound form and an active GTP-bound form that is able to recruit to membranes different set of downstream effectors directly responsible for vesicle formation, movement, tethering and fusion. The low intrinsic GTPase activity of RAB43 is activated by USP6NL. Involved in retrograde transport from the endocytic pathway to the Golgi apparatus. Involved in the transport of Shiga toxin from early and recycling endosomes to the trans-Golgi network. Required for the structural integrity of the Golgi complex. Plays a role in the maturation of phagosomes that engulf pathogens, such as S.aureus and Mycobacterium. This chain is Ras-related protein Rab-43 (Rab43), found in Rattus norvegicus (Rat).